A 901-amino-acid chain; its full sequence is Protein translocase subunit SecA (901 aa).

ATP is bound by residues glutamine 87, 105-109 (GEGKT), and aspartate 512. The segment at 859-901 (HQDDDSAAAAALAAQTGERKVGRNDPCPCGSGKKYKQCHGRLQ) is disordered. Positions 885, 887, 896, and 897 each coordinate Zn(2+). Residues 891–901 (KKYKQCHGRLQ) show a composition bias toward basic residues.

The protein belongs to the SecA family. Monomer and homodimer. Part of the essential Sec protein translocation apparatus which comprises SecA, SecYEG and auxiliary proteins SecDF-YajC and YidC. Requires Zn(2+) as cofactor.

Its subcellular location is the cell inner membrane. It is found in the cytoplasm. The enzyme catalyses ATP + H2O + cellular proteinSide 1 = ADP + phosphate + cellular proteinSide 2.. In terms of biological role, part of the Sec protein translocase complex. Interacts with the SecYEG preprotein conducting channel. Has a central role in coupling the hydrolysis of ATP to the transfer of proteins into and across the cell membrane, serving both as a receptor for the preprotein-SecB complex and as an ATP-driven molecular motor driving the stepwise translocation of polypeptide chains across the membrane. The protein is Protein translocase subunit SecA of Escherichia coli O127:H6 (strain E2348/69 / EPEC).